A 356-amino-acid chain; its full sequence is NF-kappa-B inhibitor beta (356 aa).

Residues Ser-19 and Ser-23 each carry the phosphoserine; by RPS6KA1 modification. ANK repeat units lie at residues 57-86 (DGDT…GTEY), 93-122 (LGQT…GLCV), and 126-155 (RGHT…RRPR). The interval 149–193 (PRPRRPREAPDTYLAQGPDRTPDTNHTPVALYPDSDLEKEEEESE) is disordered. At Ser-183 the chain carries Phosphoserine. The span at 183-193 (SDLEKEEEESE) shows a compositional bias: acidic residues. ANK repeat units lie at residues 206–235 (EGHT…DLDK), 240–269 (CGRS…NPAA), and 273–302 (GGRT…PEPE). The disordered stretch occupies residues 298 to 356 (APEPEGEDEKSGPCSSSSDSDSGDEGDEYDDIVVHSSRSQTRLPPTPASKPLPDDPRPV). Phosphoserine; by CK2 occurs at positions 313 and 315. The segment covering 318 to 328 (DSGDEGDEYDD) has biased composition (acidic residues).

This sequence belongs to the NF-kappa-B inhibitor family. In terms of assembly, interacts with THRB (via ligand-binding domain). Interacts with RELA and REL. Interacts with COMMD1. Interacts with inhibitor kappa B-interacting Ras-like NKIRAS1 and NKIRAS2. Phosphorylated by RPS6KA1; followed by degradation. Interaction with NKIRAS1 and NKIRAS2 probably prevents phosphorylation. Expressed in all tissues examined.

The protein localises to the cytoplasm. Its subcellular location is the nucleus. In terms of biological role, inhibits NF-kappa-B by complexing with and trapping it in the cytoplasm. However, the unphosphorylated form resynthesized after cell stimulation is able to bind NF-kappa-B allowing its transport to the nucleus and protecting it to further NFKBIA-dependent inactivation. Association with inhibitor kappa B-interacting NKIRAS1 and NKIRAS2 prevent its phosphorylation rendering it more resistant to degradation, explaining its slower degradation. This Homo sapiens (Human) protein is NF-kappa-B inhibitor beta (NFKBIB).